The primary structure comprises 330 residues: MGGKGVMMVAILCLWALSATSEAVTEAEPGLMMNFYKDTCPQAEDIVREQVKLLYKRHKNTAFSWLRNIFHDCAVESCDASLLLDSTRRELGEKEHDRSFGLRNFRYIEEIKEALERECPGVVSCSDILVLSAREGIEAVGGPYIPLKTGRRDGLKSRTDMLESYLPDHNESISVVLEKFKSIGIDTPGLVALLGSHSVGRTHCVKLVHRLYPEVDPSLNPDHVPHMLHKCPDSIPDPKAVQYVRNDRGTPMVLDNNYYRNILDNKGLLLVDHQLAHDKRTRPIVKKMAKDQAYFFKEFTRAIQILSENNPLTGSKGEIRKQCNLANKNH.

Residues 1–23 form the signal peptide; the sequence is MGGKGVMMVAILCLWALSATSEA. Intrachain disulfides connect cysteine 40–cysteine 119, cysteine 73–cysteine 78, cysteine 125–cysteine 323, and cysteine 204–cysteine 231. Catalysis depends on histidine 71, which acts as the Proton acceptor. Positions 72, 75, 79, and 81 each coordinate Ca(2+). Proline 167 contacts substrate. Asparagine 170 is a glycosylation site (N-linked (GlcNAc...) asparagine). Histidine 197 contacts heme b. Position 198 (serine 198) interacts with Ca(2+). Ca(2+) contacts are provided by aspartate 247, threonine 250, and aspartate 255.

Belongs to the peroxidase family. Classical plant (class III) peroxidase subfamily. Requires heme b as cofactor. Ca(2+) is required as a cofactor. As to expression, constitutively expressed in the whole plant, with the highest expression in roots.

Its subcellular location is the secreted. The catalysed reaction is 2 a phenolic donor + H2O2 = 2 a phenolic radical donor + 2 H2O. Functionally, removal of H(2)O(2), oxidation of toxic reductants, biosynthesis and degradation of lignin, suberization, auxin catabolism, response to environmental stresses such as wounding, pathogen attack and oxidative stress. These functions might be dependent on each isozyme/isoform in each plant tissue. Its function is as follows. Might function as heat shock-like defense protein. The protein is Peroxidase 42 (PER42) of Arabidopsis thaliana (Mouse-ear cress).